The sequence spans 330 residues: DNA-directed RNA polymerase subunit alpha (330 aa).

An alpha N-terminal domain (alpha-NTD) region spans residues M1–K232. The alpha C-terminal domain (alpha-CTD) stretch occupies residues E248–D330.

Belongs to the RNA polymerase alpha chain family. In terms of assembly, homodimer. The RNAP catalytic core consists of 2 alpha, 1 beta, 1 beta' and 1 omega subunit. When a sigma factor is associated with the core the holoenzyme is formed, which can initiate transcription.

The catalysed reaction is RNA(n) + a ribonucleoside 5'-triphosphate = RNA(n+1) + diphosphate. Its function is as follows. DNA-dependent RNA polymerase catalyzes the transcription of DNA into RNA using the four ribonucleoside triphosphates as substrates. The polypeptide is DNA-directed RNA polymerase subunit alpha (Porphyromonas gingivalis (strain ATCC BAA-308 / W83)).